A 235-amino-acid chain; its full sequence is MPELRYCHGPYRGKECPVCGKPGKIMMNEAEINEVSRTLAAVLRHDPGRYGIRLDSHGYARISSLVSMFRKRKGMRWMTDDHLVYLAETDPRKRYQISGVLIRAVYGHTIDVDLTDLPTDGIPDTLYYQSSTAEAPLVKEAGIYPSDKSWIHLSGTYRKSFVSGLYHIDDPLVLAVNARSMIENGIDIFRSNDDIYLTKQVPPEYITIAEKEEVVLTDEEKDDIKRVREKNSGRD.

It belongs to the KptA/TPT1 family.

Functionally, removes the 2'-phosphate from RNA via an intermediate in which the phosphate is ADP-ribosylated by NAD followed by a presumed transesterification to release the RNA and generate ADP-ribose 1''-2''-cyclic phosphate (APPR&gt;P). May function as an ADP-ribosylase. In Thermoplasma volcanium (strain ATCC 51530 / DSM 4299 / JCM 9571 / NBRC 15438 / GSS1), this protein is Probable RNA 2'-phosphotransferase.